The chain runs to 237 residues: MNEFFRDDIFNRPQNVVDFRFDERTAAVFPDMIHRSIPAYASLLHMLGVIAGTYVQEGDHIYDLGCSLGGATLSLSRFIPKTAHITAVDSSPAMVQRFRAYVEGAALHHIEVLEADIIHLPLKSSRVIVMNFVLQFIPPPARDALIAKIYQALTEGGILLLAEKTQPEDDLLRTWHEAFKASQGYSALAIAQKREALENVMKIETETAERVRLQAAGFRRVLPYFQGMMFKAWVAIK.

S-adenosyl-L-methionine is bound by residues Tyr-40, 65 to 67 (GCS), 116 to 117 (DI), Asn-131, and Arg-194.

The protein belongs to the class I-like SAM-binding methyltransferase superfamily. Cx-SAM synthase family. In terms of assembly, homodimer.

It carries out the reaction prephenate + S-adenosyl-L-methionine = carboxy-S-adenosyl-L-methionine + 3-phenylpyruvate + H2O. In terms of biological role, catalyzes the conversion of S-adenosyl-L-methionine (SAM) to carboxy-S-adenosyl-L-methionine (Cx-SAM). This Dichelobacter nodosus (strain VCS1703A) protein is Carboxy-S-adenosyl-L-methionine synthase.